A 226-amino-acid polypeptide reads, in one-letter code: UPF0319 protein SO_1816 (226 aa).

Residues 1–21 form the signal peptide; that stretch reads MKSLLPISSLLVLLGSASVSA.

Belongs to the UPF0319 family.

The sequence is that of UPF0319 protein SO_1816 from Shewanella oneidensis (strain ATCC 700550 / JCM 31522 / CIP 106686 / LMG 19005 / NCIMB 14063 / MR-1).